The chain runs to 750 residues: Tyrosine-protein phosphatase 2 (750 aa).

The interval 1-20 (MDRIAQQYRNGKRDNNGNRM) is disordered. Phosphoserine is present on S258. Disordered regions lie at residues 327–348 (LHQKQLSQKQRGPQSTDDSKLY) and 425–450 (VKLPHSPKPPAVSEASTTETKTDKSY). The span at 330–348 (KQLSQKQRGPQSTDDSKLY) shows a compositional bias: polar residues. Positions 383-737 (SPSPLSSDDT…IACYEALLNY (355 aa)) constitute a Tyrosine-protein phosphatase domain. S430 is modified (phosphoserine). C666 functions as the Phosphocysteine intermediate in the catalytic mechanism.

It belongs to the protein-tyrosine phosphatase family. Non-receptor class subfamily. As to quaternary structure, interacts with HOG1.

The protein localises to the cytoplasm. It localises to the nucleus. The enzyme catalyses O-phospho-L-tyrosyl-[protein] + H2O = L-tyrosyl-[protein] + phosphate. Its function is as follows. Major phosphatase responsible with PTP3 for tyrosine dephosphorylation of MAP kinase HOG1 to inactivate its activity. May also be involved in the regulation of MAP kinase FUS3. May be implicated in the ubiquitin-mediated protein degradation. The protein is Tyrosine-protein phosphatase 2 (PTP2) of Saccharomyces cerevisiae (strain ATCC 204508 / S288c) (Baker's yeast).